The sequence spans 111 residues: MICOS complex subunit MIC13 (111 aa).

The chain crosses the membrane as a helical span at residues 8–26 (VVKFATKVTIAGGALYVAY).

This sequence belongs to the MICOS complex subunit Mic13 family. In terms of assembly, component of the mitochondrial contact site and cristae organizing system (MICOS) complex.

Its subcellular location is the mitochondrion inner membrane. Its function is as follows. Component of the MICOS complex, a large protein complex of the mitochondrial inner membrane that plays crucial roles in the maintenance of crista junctions, inner membrane architecture, and formation of contact sites to the outer membrane. Constituent of mature MICOS complex, it is required for the formation of cristae junction (CJ) and maintenance of cristae morphology. Required for the incorporation of MIC10 into the MICOS complex. The sequence is that of MICOS complex subunit MIC13 from Danio rerio (Zebrafish).